Consider the following 787-residue polypeptide: Ribonucleoside-diphosphate reductase large subunit (787 aa).

Substrate contacts are provided by residues T209, 224–225 (SC), G255, 436–440 (NLCTE), and 618–622 (PTVSS). C225 and C453 are joined by a disulfide. Catalysis depends on N436, which acts as the Proton acceptor. The active-site Cysteine radical intermediate is C438. The active-site Proton acceptor is E440.

Belongs to the ribonucleoside diphosphate reductase large chain family. In terms of assembly, heterotetramer composed of a homodimer of the large subunit (R1) and a homodimer of the small subunit (R2). Larger multisubunit protein complex are also active, composed of (R1)n(R2)n.

It catalyses the reaction a 2'-deoxyribonucleoside 5'-diphosphate + [thioredoxin]-disulfide + H2O = a ribonucleoside 5'-diphosphate + [thioredoxin]-dithiol. Ribonucleoside-diphosphate reductase holoenzyme provides the precursors necessary for viral DNA synthesis. Allows virus growth in non-dividing cells, as well as reactivation from latency in infected hosts. Catalyzes the biosynthesis of deoxyribonucleotides from the corresponding ribonucleotides. The sequence is that of Ribonucleoside-diphosphate reductase large subunit from Bos taurus (Bovine).